Consider the following 65-residue polypeptide: Ringhalexin (65 aa).

4 cysteine pairs are disulfide-bonded: Cys-3–Cys-24, Cys-17–Cys-42, Cys-46–Cys-57, and Cys-58–Cys-63.

As to expression, expressed by the venom gland.

It is found in the secreted. Functionally, has anticoagulant activity, since it is able to inhibit the activation of coagulation factor X (F10) by coagulation factor VIIa (F7) (IC(50)=123.8 nM). Also shows weak irreversible neurotoxicity. The polypeptide is Ringhalexin (Hemachatus haemachatus (Rinkhals)).